A 402-amino-acid chain; its full sequence is Tryptophan synthase beta chain (402 aa).

Residue Lys-88 is modified to N6-(pyridoxal phosphate)lysine.

It belongs to the TrpB family. As to quaternary structure, tetramer of two alpha and two beta chains. Pyridoxal 5'-phosphate is required as a cofactor.

It carries out the reaction (1S,2R)-1-C-(indol-3-yl)glycerol 3-phosphate + L-serine = D-glyceraldehyde 3-phosphate + L-tryptophan + H2O. It participates in amino-acid biosynthesis; L-tryptophan biosynthesis; L-tryptophan from chorismate: step 5/5. Functionally, the beta subunit is responsible for the synthesis of L-tryptophan from indole and L-serine. The sequence is that of Tryptophan synthase beta chain (trpB) from Pasteurella multocida (strain Pm70).